Reading from the N-terminus, the 529-residue chain is Bifunctional purine biosynthesis protein PurH (529 aa).

One can recognise an MGS-like domain in the interval 1–148 (MQQRRPVRRA…KNHKDVAIVV (148 aa)).

The protein belongs to the PurH family.

The catalysed reaction is (6R)-10-formyltetrahydrofolate + 5-amino-1-(5-phospho-beta-D-ribosyl)imidazole-4-carboxamide = 5-formamido-1-(5-phospho-D-ribosyl)imidazole-4-carboxamide + (6S)-5,6,7,8-tetrahydrofolate. The enzyme catalyses IMP + H2O = 5-formamido-1-(5-phospho-D-ribosyl)imidazole-4-carboxamide. The protein operates within purine metabolism; IMP biosynthesis via de novo pathway; 5-formamido-1-(5-phospho-D-ribosyl)imidazole-4-carboxamide from 5-amino-1-(5-phospho-D-ribosyl)imidazole-4-carboxamide (10-formyl THF route): step 1/1. It participates in purine metabolism; IMP biosynthesis via de novo pathway; IMP from 5-formamido-1-(5-phospho-D-ribosyl)imidazole-4-carboxamide: step 1/1. This is Bifunctional purine biosynthesis protein PurH from Klebsiella pneumoniae (strain 342).